Reading from the N-terminus, the 235-residue chain is Exosome complex component Rrp4 (235 aa).

The S1 motif domain occupies 67–139; sequence GDVVIGLIQS…KTRSPLLTVQ (73 aa). Positions 149-205 constitute a KH domain; sequence GKIVEISPAKVPRVIGRKMSMLKTLEEKTECKIFVARNGRIHLECPNEDLEAIAVMA.

This sequence belongs to the RRP4 family. Component of the archaeal exosome complex. Forms a trimer of Rrp4 and/or Csl4 subunits. The trimer associates with a hexameric ring-like arrangement composed of 3 Rrp41-Rrp42 heterodimers.

It localises to the cytoplasm. Functionally, non-catalytic component of the exosome, which is a complex involved in RNA degradation. Increases the RNA binding and the efficiency of RNA degradation. Confers strong poly(A) specificity to the exosome. The protein is Exosome complex component Rrp4 of Aeropyrum pernix (strain ATCC 700893 / DSM 11879 / JCM 9820 / NBRC 100138 / K1).